Reading from the N-terminus, the 831-residue chain is AdoMet-dependent rRNA methyltransferase SPB1 (831 aa).

S-adenosyl-L-methionine is bound by residues glycine 58, tryptophan 60, aspartate 78, aspartate 94, and aspartate 119. Catalysis depends on lysine 159, which acts as the Proton acceptor. Coiled-coil stretches lie at residues 346–389 and 440–479; these read LTED…QMNM and NDIN…ERDA. 2 disordered regions span residues 492-535 and 565-645; these read DEGW…ADQR and MNKK…DQQS. Basic and acidic residues predominate over residues 499–510; sequence ESDKEGSDKETE. Composition is skewed to acidic residues over residues 511–526, 594–611, and 618–631; these read ANDY…DDDE, MEVD…DSDF, and PDEE…DNEN. A compositionally biased stretch (basic and acidic residues) spans 632-645; it reads DVSRKYSKAKDQQS. A coiled-coil region spans residues 729-782; the sequence is LEAQGRKKLRALKRLEKLKKKSDMINEDSAKSERDKADEIQKLMKKLTKKQKTK.

It belongs to the class I-like SAM-binding methyltransferase superfamily. RNA methyltransferase RlmE family. SPB1 subfamily. As to quaternary structure, component of the nucleolar and nucleoplasmic pre-60S ribosomal particle.

Its subcellular location is the nucleus. The protein localises to the nucleolus. The enzyme catalyses a ribonucleotide in rRNA + S-adenosyl-L-methionine = a 2'-O-methylribonucleotide in rRNA + S-adenosyl-L-homocysteine + H(+). Functionally, required for proper assembly of pre-ribosomal particles during the biogenesis of the 60S ribosomal subunit. The polypeptide is AdoMet-dependent rRNA methyltransferase SPB1 (Debaryomyces hansenii (strain ATCC 36239 / CBS 767 / BCRC 21394 / JCM 1990 / NBRC 0083 / IGC 2968) (Yeast)).